The primary structure comprises 784 residues: MMIPARHMPSMIGRNGAAYGSSSALSLSQPNLLDNHQFQQAFQHQQQQHHLLDQIPATTAESGDNMIRSRASDPLGGDEFESKSGSENVDGVSVDDQDPNQRPRKKRYHRHTQHQIQEMEAFFKECPHPDDKQRKELSRELGLEPLQVKFWFQNKRTQMKNQHERHENSQLRSDNEKLRAENMRYKEALSSASCPNCGGPAALGEMSFDEHHLRIENARLREEIDRISAIAAKYVGKPMVPFPVLSNPMAAAASRAPLDLPVAPYGVPGDMFGGGGAGELLRGVQSEVDKPMIVELAVAAMEELVRMAQLDEPLWSVAPPLDATAAAMETLSEEEYARMFPRGLGPKQYGLRSEASRDSAVVIMTHANLVEILMDANQYAAVFSNIVSRAITLEVLSTGVAGNYNGALQVMSVEFQVPSPLVPTRESYFVRYCKQNADGTWAVVDVSLDSLRPSPVLKCRRRPSGCLIQEMPNGYSKVTWVEHVEVDDRSVHNIYKLLVNSGLAFGARRWVGTLDRQCERLASVMASNIPTSDIGVITSSEGRKSMLKLAERMVVSFCGGVTASVAHQWTTLSGSGAEDVRVMTRKSVDDPGRPPGIVLNAATSFWLPVPPKRVFDFLRDESSRSEWDILSNGGIVQEMAHIANGRDQGNCVSLLRVNSSNSNQSNMLILQESCTDASGSYVIYAPVDVVAMNVVLNGGDPDYVALLPSGFAILPDGPAHDGGDGDGGVGVGSGGSLLTVAFQILVDSVPTAKLSLGSVATVNSLIACTVERIKAAVSGESNPQ.

The disordered stretch occupies residues 60-113; that stretch reads AESGDNMIRSRASDPLGGDEFESKSGSENVDGVSVDDQDPNQRPRKKRYHRHTQ. Positions 102 to 113 are enriched in basic residues; that stretch reads RPRKKRYHRHTQ. The homeobox DNA-binding region spans 104–163; that stretch reads RKKRYHRHTQHQIQEMEAFFKECPHPDDKQRKELSRELGLEPLQVKFWFQNKRTQMKNQH. Residues 158–234 adopt a coiled-coil conformation; sequence QMKNQHERHE…DRISAIAAKY (77 aa). In terms of domain architecture, START spans 286-523; the sequence is SEVDKPMIVE…LDRQCERLAS (238 aa).

The protein belongs to the HD-ZIP homeobox family. Class IV subfamily.

It is found in the nucleus. Its function is as follows. Probable transcription factor. The chain is Homeobox-leucine zipper protein ROC2 (ROC2) from Oryza sativa subsp. japonica (Rice).